The sequence spans 62 residues: Photosystem II reaction center protein Z (62 aa).

2 helical membrane passes run 8 to 28 (AVFA…VVFA) and 41 to 61 (FSGT…NSLI).

This sequence belongs to the PsbZ family. In terms of assembly, PSII is composed of 1 copy each of membrane proteins PsbA, PsbB, PsbC, PsbD, PsbE, PsbF, PsbH, PsbI, PsbJ, PsbK, PsbL, PsbM, PsbT, PsbY, PsbZ, Psb30/Ycf12, at least 3 peripheral proteins of the oxygen-evolving complex and a large number of cofactors. It forms dimeric complexes.

The protein localises to the plastid. Its subcellular location is the chloroplast thylakoid membrane. In terms of biological role, may control the interaction of photosystem II (PSII) cores with the light-harvesting antenna, regulates electron flow through the 2 photosystem reaction centers. PSII is a light-driven water plastoquinone oxidoreductase, using light energy to abstract electrons from H(2)O, generating a proton gradient subsequently used for ATP formation. The polypeptide is Photosystem II reaction center protein Z (Phalaenopsis aphrodite subsp. formosana (Moth orchid)).